The chain runs to 516 residues: 2,3-bisphosphoglycerate-independent phosphoglycerate mutase (516 aa).

The Mn(2+) site is built by Asp13 and Ser63. The active-site Phosphoserine intermediate is the Ser63. Substrate-binding positions include His124, 154-155, Arg186, Arg192, 262-265, and Lys337; these read RD and RPDR. Mn(2+) contacts are provided by Asp404, His408, Asp445, His446, and His464.

It belongs to the BPG-independent phosphoglycerate mutase family. In terms of assembly, monomer. Mn(2+) serves as cofactor.

It catalyses the reaction (2R)-2-phosphoglycerate = (2R)-3-phosphoglycerate. Its pathway is carbohydrate degradation; glycolysis; pyruvate from D-glyceraldehyde 3-phosphate: step 3/5. Its function is as follows. Catalyzes the interconversion of 2-phosphoglycerate and 3-phosphoglycerate. This is 2,3-bisphosphoglycerate-independent phosphoglycerate mutase from Cellvibrio japonicus (strain Ueda107) (Pseudomonas fluorescens subsp. cellulosa).